Consider the following 206-residue polypeptide: Orotate phosphoribosyltransferase (206 aa).

Residues Lys26, 72-73 (YK), Arg99, Lys100, Lys103, His105, and 124-132 (DDVMTSGFS) each bind 5-phospho-alpha-D-ribose 1-diphosphate. Orotate-binding residues include Thr128 and Arg157.

Belongs to the purine/pyrimidine phosphoribosyltransferase family. PyrE subfamily. As to quaternary structure, homodimer. Requires Mg(2+) as cofactor.

It carries out the reaction orotidine 5'-phosphate + diphosphate = orotate + 5-phospho-alpha-D-ribose 1-diphosphate. Its pathway is pyrimidine metabolism; UMP biosynthesis via de novo pathway; UMP from orotate: step 1/2. In terms of biological role, catalyzes the transfer of a ribosyl phosphate group from 5-phosphoribose 1-diphosphate to orotate, leading to the formation of orotidine monophosphate (OMP). The polypeptide is Orotate phosphoribosyltransferase (Buchnera aphidicola subsp. Baizongia pistaciae (strain Bp)).